The primary structure comprises 587 residues: MANSGLILLVMFMIHVTTVHNVPLPSTAPSIITQLSDITTSIIEEDAFGLTTPTTGLLTPVSENDSDDDGDDITTIQTTTSSSQTVISGVVVEEGVHESNVEILKAHLEKFGYTPPGSTFGEANLNYTSAILDFQEHGGINQTGILDADTAELLSTPRCGVPDVLPFVTSSITWSRNQPVTYSFGALTSDLNQNDVKDEIRRAFRVWDDVSGLSFREVPDTTSVDIRIKFGSYDHGDGISFDGRGGVLAHAFLPRNGDAHFDDSETWTEGTRSGTNLFQVAAHEFGHSLGLYHSTVRSALMYPYYQGYVPNFRLDNDDIAGIRSLYGSNSGSGTTTTTRRPTTTRATTTRRTTTTRATTTRATTTTTTSPSRPSPPRRACSGSFDAVVRDSSNRIYALTGPYFWQLDQPSPSWGLVSNRFGFGLPQNIDASFQRGVVTYFFSECYYYYQTSTQRNFPRIPVNRKWVGLPCNIDAVYRSSRGPTYFFKDSFVYKFNSNNRLQRRTRISSLFNDVPSALHDGVEAVVRADRNYIHFYRDGRYYRMTDYGRQFVNFPNGLPYSDVIESVIPQCRGRSLSYESEGCSNSSE.

The N-terminal stretch at 1–18 is a signal peptide; sequence MANSGLILLVMFMIHVTT. Positions 19-166 are cleaved as a propeptide — activation peptide; that stretch reads VHNVPLPSTA…PRCGVPDVLP (148 aa). N-linked (GlcNAc...) asparagine glycans are attached at residues Asn64, Asn126, and Asn141. Residues 157–164 carry the Cysteine switch motif; that stretch reads PRCGVPDV. Zn(2+)-binding residues include Cys159 and His283. Residue Glu284 is part of the active site. His287 and His293 together coordinate Zn(2+). A disordered region spans residues 325–382; sequence LYGSNSGSGTTTTTRRPTTTRATTTRRTTTTRATTTRATTTTTTSPSRPSPPRRACSG. Over residues 334–371 the composition is skewed to low complexity; the sequence is TTTTTRRPTTTRATTTRRTTTTRATTTRATTTTTTSPS. A disulfide bond links Cys380 and Cys582. 4 Hemopexin repeats span residues 381 to 422, 425 to 468, 469 to 513, and 518 to 570; these read SGSF…RFGF, PQNI…WVGL, PCNI…FNDV, and HDGV…IPQC. N-linked (GlcNAc...) asparagine glycosylation is present at Asn584.

It belongs to the peptidase M10A family. Zn(2+) is required as a cofactor.

The catalysed reaction is Hydrolysis of proteins of the fertilization envelope and dimethylcasein.. Its function is as follows. Allows the sea urchin to digest the protective envelope derived from the egg extracellular matrix; thus allowing the sea urchin to swim freely. This Paracentrotus lividus (Common sea urchin) protein is Hatching enzyme.